The following is a 248-amino-acid chain: 3-deoxy-manno-octulosonate cytidylyltransferase (248 aa).

This sequence belongs to the KdsB family. Requires Mg(2+) as cofactor.

The protein localises to the cytoplasm. The enzyme catalyses 3-deoxy-alpha-D-manno-oct-2-ulosonate + CTP = CMP-3-deoxy-beta-D-manno-octulosonate + diphosphate. The protein operates within nucleotide-sugar biosynthesis; CMP-3-deoxy-D-manno-octulosonate biosynthesis; CMP-3-deoxy-D-manno-octulosonate from 3-deoxy-D-manno-octulosonate and CTP: step 1/1. Its pathway is bacterial outer membrane biogenesis; lipopolysaccharide biosynthesis. Activates KDO (a required 8-carbon sugar) for incorporation into bacterial lipopolysaccharide in Gram-negative bacteria. In Escherichia coli O157:H7, this protein is 3-deoxy-manno-octulosonate cytidylyltransferase.